A 297-amino-acid chain; its full sequence is Virulence genes transcriptional activator (297 aa).

The region spanning 1 to 61 (MDFLINKKLK…IRKNGTLIPT (61 aa)) is the HTH lysR-type domain. Positions 21–40 (FSIATSVLYITRTPLSRVIS) form a DNA-binding region, H-T-H motif.

This sequence belongs to the LysR transcriptional regulatory family.

It localises to the cytoplasm. Its function is as follows. Positive regulator for the plasmid-encoded virulence factors SpvA, SpvB, and SpvC. In Salmonella typhimurium (strain LT2 / SGSC1412 / ATCC 700720), this protein is Virulence genes transcriptional activator (mkaC).